A 248-amino-acid chain; its full sequence is Probable phosphatase Sfri_3709 (248 aa).

Zn(2+) contacts are provided by His8, His10, His16, His41, Glu74, His102, His132, Asp193, and His195.

Belongs to the PHP family. The cofactor is Zn(2+).

This Shewanella frigidimarina (strain NCIMB 400) protein is Probable phosphatase Sfri_3709.